The chain runs to 360 residues: Homoserine O-succinyltransferase (360 aa).

Cysteine 146 (acyl-thioester intermediate) is an active-site residue. 2 residues coordinate substrate: lysine 167 and serine 196. The Proton acceptor role is filled by histidine 239. Residue glutamate 241 is part of the active site. Substrate is bound at residue arginine 253.

It belongs to the MetA family.

It is found in the cytoplasm. It catalyses the reaction L-homoserine + succinyl-CoA = O-succinyl-L-homoserine + CoA. The protein operates within amino-acid biosynthesis; L-methionine biosynthesis via de novo pathway; O-succinyl-L-homoserine from L-homoserine: step 1/1. Transfers a succinyl group from succinyl-CoA to L-homoserine, forming succinyl-L-homoserine. In vitro, can also use glutaryl-CoA as acyl donor. This chain is Homoserine O-succinyltransferase, found in Thiothrix nivea (strain ATCC 35100 / DSM 5205 / JP2).